The sequence spans 793 residues: Putative potassium transporter 8 (793 aa).

The Cytoplasmic segment spans residues 1–22; that stretch reads MDLEFGRGMRSPQRDSWKTTLL. The chain crosses the membrane as a helical span at residues 23–43; it reads LAYQSLGVVYGDLSISPLYVF. The Extracellular portion of the chain corresponds to 44–59; that stretch reads KSTFAEDIQHSETNEE. Residues 60–80 form a helical membrane-spanning segment; that stretch reads IFGVLSFVFWTLTLIPLIKYV. Residues 81–151 are Cytoplasmic-facing; it reads SIVLRADDNG…EKHKKLHTAL (71 aa). Residues 152–172 traverse the membrane as a helical segment; the sequence is LIMVLIGTCMVIGDGVLTPAI. Residues 173–191 are Extracellular-facing; it reads SVFSAVSGLEFSLSKDHRE. Residues 192–212 form a helical membrane-spanning segment; it reads YAVIPITCVILAFLFALQHYG. Residues 213-215 lie on the Cytoplasmic side of the membrane; sequence THR. The chain crosses the membrane as a helical span at residues 216 to 236; sequence VGFLFAPIVLAWLICMSALGL. At 237–264 the chain is on the extracellular side; the sequence is YNIIHWNPHVYQALNPCYMFKFLKKTRK. Residues 265–285 form a helical membrane-spanning segment; sequence YGWMSLGGILLCMTGSEAMFA. At 286–292 the chain is on the cytoplasmic side; it reads DLGHFSY. Residues 293–313 form a helical membrane-spanning segment; sequence SAIQLAFTSLVYPALILAYMG. At 314 to 343 the chain is on the extracellular side; sequence QAAYLSKHHDFYSNSQVGFYIAVPDKVRWP. The chain crosses the membrane as a helical span at residues 344-364; that stretch reads VLVLAILASVVGSQAIISGTF. Over 365–391 the chain is Cytoplasmic; it reads SIINQSQSLSCFPRVKVVHTSDKIHGQ. The chain crosses the membrane as a helical span at residues 392-412; the sequence is IYIPEINWLLMILCIAVTVGF. Topologically, residues 413–422 are extracellular; the sequence is RDTKHMGNAS. Residue asparagine 420 is glycosylated (N-linked (GlcNAc...) asparagine). Residues 423–443 traverse the membrane as a helical segment; the sequence is GLAVITVMLVTTCLTSLVIML. Over 444-448 the chain is Cytoplasmic; sequence CWRRP. A helical transmembrane segment spans residues 449–469; sequence PVLALCFLLFFGSVEALYFSA. At 470-473 the chain is on the extracellular side; sequence SLIK. The chain crosses the membrane as a helical span at residues 474–494; that stretch reads FLEGAWLPILLALFLMAVMLV. Residues 495 to 793 are Cytoplasmic-facing; sequence WHYTTIKKYE…LLEVGMVYVL (299 aa). The span at 664 to 675 shows a compositional bias: polar residues; it reads DSVQHSSAASVE. The disordered stretch occupies residues 664 to 698; sequence DSVQHSSAASVETTTTRRRSGGGDDDGSPGGGGGR.

Belongs to the HAK/KUP transporter (TC 2.A.72.3) family.

The protein resides in the membrane. Its function is as follows. High-affinity potassium transporter. This is Putative potassium transporter 8 (HAK8) from Oryza sativa subsp. japonica (Rice).